The chain runs to 1401 residues: MEEIPVKVAVRIRPLLCKEALHNHQVCVRVIPNSQQVIIGRDRVFTFDFVFGKNSTQDEVYNTCIKPLVLSLIEGYNATVFAYGQTGSGKTYTIGGGHIASVVEGQKGIIPRAIQEIFQSISEHPSIDFNVKVSYIEVYKEDLRDLLELETSMKDLHIREDEKGNTVIVGAKECHVESAGEVMSLLEMGNAARHTGTTQMNEHSSRSHAIFTISICQVHKNMEAAEDGSWYSPRHIVSKFHFVDLAGSERVTKTGNTGERFKESIQINSGLLALGNVISALGDPRRKSSHIPYRDAKITRLLKDSLGGSAKTVMITCVSPSSSNFDESLNSLKYANRARNIRNKPTVNFSPESDRIDEMEFEIKLLREALQSQQAGVSQTTQINREGSPDTNRIHSLEEQVAQLQGECLGYQCCVEEAFTFLVDLKDTVRLNEKQQHKLQEWFNMIQEVRKAVLTSFRGIGGTASLEEGPQHVTVLQLKRELKKCQCVLAADEVVFNQKELEVKELKNQVQMMVQENKGHAVSLKEAQKVNRLQNEKIIEQQLLVDQLSEELTKLNLSVTSSAKENCGDGPDARIPERRPYTVPFDTHLGHYIYIPSRQDSRKVHTSPPMYSLDRIFAGFRTRSQMLLGHIEEQDKVLHCQFSDNSDDEESEGQEKSGTRCRSRSWIQKPDSVCSLVELSDTQDETQKSDLENEDLKIDCLQESQELNLQKLKNSERILTEAKQKMRELTINIKMKEDLIKELIKTGNDAKSVSKQYSLKVTKLEHDAEQAKVELIETQKQLQELENKDLSDVAMKVKLQKEFRKKMDAAKLRVQVLQKKQQDSKKLASLSIQNEKRANELEQSVDHMKYQKIQLQRKLREENEKRKQLDAVIKRDQQKIKEIQLKTGQEEGLKPKAEDLDACNLKRRKGSFGSIDHLQKLDEQKKWLDEEVEKVLNQRQELEELEADLKKREAIVSKKEALLQEKSHLENKKLRSSQALNTDSLKISTRLNLLEQELSEKNVQLQTSTAEEKTKISEQVEVLQKEKDQLQKRRHNVDEKLKNGRVLSPEEEHVLFQLEEGIEALEAAIEYRNESIQNRQKSLRASFHNLSRGEANVLEKLACLSPVEIRTILFRYFNKVVNLREAERKQQLYNEEMKMKVLERDNMVRELESALDHLKLQCDRRLTLQQKEHEQKMQLLLHHFKEQDGEGIMETFKTYEDKIQQLEKDLYFYKKTSRDHKKKLKELVGEAIRRQLAPSEYQEAGDGVLKPEGGGMLSEELKWASRPESMKLSGREREMDSSASSLRTQPNPQKLWEDIPELPPIHSSLAPPSGHMLGNENKTETDDNQFTKSHSRLSSQIQVVGNVGRLHGVTPVKLCRKELRQISALELSLRRSSLGVGIGSMAADSIEVSRKPRDLKT.

The Kinesin motor domain maps to 5–341 (PVKVAVRIRP…LKYANRARNI (337 aa)). 84-91 (GQTGSGKT) serves as a coordination point for ATP. Coiled coils occupy residues 352–413 (ESDR…GYQC) and 489–557 (LAAD…KLNL). A phosphoserine mark is found at serine 643, serine 646, serine 672, serine 675, and serine 704. The tract at residues 643–662 (SDNSDDEESEGQEKSGTRCR) is disordered. Coiled-coil stretches lie at residues 705–886 (QELN…IQLK), 916–1070 (DHLQ…AAIE), 1118–1154 (NKVV…LESA), and 1190–1219 (EGIM…TSRD). The residue at position 999 (serine 999) is a Phosphoserine. Over residues 1259-1280 (EELKWASRPESMKLSGREREMD) the composition is skewed to basic and acidic residues. Residues 1259-1332 (EELKWASRPE…TETDDNQFTK (74 aa)) are disordered. The segment covering 1281–1292 (SSASSLRTQPNP) has biased composition (polar residues). 2 positions are modified to phosphoserine: serine 1367 and serine 1389.

This sequence belongs to the TRAFAC class myosin-kinesin ATPase superfamily. Kinesin family. KIF27 subfamily. As to quaternary structure, interacts with STK36. In terms of tissue distribution, testis, pancreatic islet, germ cell tumors and Jurkat T-cells.

It localises to the cytoplasm. Its subcellular location is the cytoskeleton. It is found in the cell projection. The protein resides in the cilium. Functionally, plays an essential role in motile ciliogenesis. The chain is Kinesin-like protein KIF27 (KIF27) from Homo sapiens (Human).